The primary structure comprises 382 residues: Putative glutamate--cysteine ligase 2-1 (382 aa).

Belongs to the glutamate--cysteine ligase type 2 family. YbdK subfamily.

It catalyses the reaction L-cysteine + L-glutamate + ATP = gamma-L-glutamyl-L-cysteine + ADP + phosphate + H(+). Its function is as follows. ATP-dependent carboxylate-amine ligase which exhibits weak glutamate--cysteine ligase activity. The polypeptide is Putative glutamate--cysteine ligase 2-1 (Frankia casuarinae (strain DSM 45818 / CECT 9043 / HFP020203 / CcI3)).